We begin with the raw amino-acid sequence, 478 residues long: Aspartyl/glutamyl-tRNA(Asn/Gln) amidotransferase subunit B (478 aa).

This sequence belongs to the GatB/GatE family. GatB subfamily. In terms of assembly, heterotrimer of A, B and C subunits.

The enzyme catalyses L-glutamyl-tRNA(Gln) + L-glutamine + ATP + H2O = L-glutaminyl-tRNA(Gln) + L-glutamate + ADP + phosphate + H(+). It carries out the reaction L-aspartyl-tRNA(Asn) + L-glutamine + ATP + H2O = L-asparaginyl-tRNA(Asn) + L-glutamate + ADP + phosphate + 2 H(+). Functionally, allows the formation of correctly charged Asn-tRNA(Asn) or Gln-tRNA(Gln) through the transamidation of misacylated Asp-tRNA(Asn) or Glu-tRNA(Gln) in organisms which lack either or both of asparaginyl-tRNA or glutaminyl-tRNA synthetases. The reaction takes place in the presence of glutamine and ATP through an activated phospho-Asp-tRNA(Asn) or phospho-Glu-tRNA(Gln). This is Aspartyl/glutamyl-tRNA(Asn/Gln) amidotransferase subunit B from Alkalilimnicola ehrlichii (strain ATCC BAA-1101 / DSM 17681 / MLHE-1).